The sequence spans 547 residues: MLVRFGRRSGQAKESAEMKNCEEDPVLYPPLLPTKVDLRQVTIIPHNEWERIRDSLDSLTREAACLRAERKAKKEMHLRSQEVVKHWTNTYAGMKEQKLEAKKKRDEEIEAERQILDIEEAIYKQGERKKAIELAKQYQFYQTERVKNFHSGLLLSRVMKERDAQIEFQKSKIKSDKKWEEQVKLNVEKAFKEEREKAEKQRRERVALAKDHLKQIKEHEEEEERRRKEEEKDAEEIKRQNSLYEIEMKKKQGKKKEEINESRRLFFEHLNDKHIIKAVEQQQQEEEDEKIRKFIKAKKRLTQMGKEKEAETHRLMEERRKRINNFLSKLMKEKFDNEDLIIARDIAEAEAEWEKREREKYEKNKAELKAIAEHRALVMKNKEEEERQRKIEATEQMLAILKADQIFWEHEKEKKQKADKERREVQDAHIQQMAKHKFNALQAKQAESEYCRLTEALVAEKEKEFQDYAREVIESESESTKKYIYPLVKAVQEGPGGGRGPVLVDRGGLRPSYQANDTTGVQLPFYNSPGSKYNNFQKSKGRLGFTW.

The stretch at 184-254 (KLNVEKAFKE…EIEMKKKQGK (71 aa)) forms a coiled coil. The disordered stretch occupies residues 210-237 (KDHLKQIKEHEEEEERRRKEEEKDAEEI).

In terms of assembly, microtubule inner protein component of sperm flagellar doublet microtubules. As to expression, expressed in trachea multiciliated cells.

Its subcellular location is the cytoplasm. The protein resides in the cytoskeleton. It is found in the cilium axoneme. The protein localises to the flagellum axoneme. In terms of biological role, microtubule inner protein (MIP) part of the dynein-decorated doublet microtubules (DMTs) in cilia axoneme, which is required for motile cilia beating. The chain is Cilia- and flagella- associated protein 210 (CFAP210) from Bos taurus (Bovine).